A 162-amino-acid polypeptide reads, in one-letter code: MALITTGNGLIRDLEKFGSVGVYVPLEGGFEGRYRRRLRAAGYTTLQFTARGLGDVAAYLTGVHGVRPPHLGKKSSGNGAAVGNVYYLPPIVGSQLEHLPPKSKGLVLWIIEGHILSDQEVEFLTDLPKLEPRVKVVVERGGDRTFRWKALKDTFSASYQAV.

Belongs to the complex I NdhN subunit family. As to quaternary structure, NDH-1 can be composed of about 15 different subunits; different subcomplexes with different compositions have been identified which probably have different functions.

The protein resides in the cellular thylakoid membrane. It carries out the reaction a plastoquinone + NADH + (n+1) H(+)(in) = a plastoquinol + NAD(+) + n H(+)(out). It catalyses the reaction a plastoquinone + NADPH + (n+1) H(+)(in) = a plastoquinol + NADP(+) + n H(+)(out). NDH-1 shuttles electrons from an unknown electron donor, via FMN and iron-sulfur (Fe-S) centers, to quinones in the respiratory and/or the photosynthetic chain. The immediate electron acceptor for the enzyme in this species is believed to be plastoquinone. Couples the redox reaction to proton translocation, and thus conserves the redox energy in a proton gradient. Cyanobacterial NDH-1 also plays a role in inorganic carbon-concentration. In Trichormus variabilis (strain ATCC 29413 / PCC 7937) (Anabaena variabilis), this protein is NAD(P)H-quinone oxidoreductase subunit N.